A 299-amino-acid chain; its full sequence is Peroxisomal biogenesis factor 19 (299 aa).

Positions 1–63 are disordered; sequence MAAAEEDYGV…SPGDTAKDSL (63 aa). At Ala-2 the chain carries N-acetylalanine. Residues 2–56 form a docking to the peroxisome membrane and binding to PEX3 region; it reads AAAEEDYGVGAEADRELEELLESALDDFDKAKPSPAPPSTTTAPDASGPQKRSPG. The segment at 2–91 is necessary for PEX19 function on peroxisome biogenesis; sequence AAAEEDYGVG…QATAEFEKAM (90 aa). The span at 16–27 shows a compositional bias: acidic residues; the sequence is RELEELLESALD. Phosphoserine is present on residues Ser-35, Ser-54, and Ser-66. Thr-236 carries the phosphothreonine modification. Cys-296 carries the post-translational modification Cysteine methyl ester. Cys-296 carries S-farnesyl cysteine lipidation. Residues 297–299 constitute a propeptide, removed in mature form; it reads LIM.

Belongs to the peroxin-19 family. As to quaternary structure, interacts with a broad range of peroxisomal membrane proteins, including PEX3, PEX10, PEX11A, PEX11B, PEX12, PEX13, PEX14 and PEX16, PXMP2/PMP22, PXMP4/PMP24, SLC25A17/PMP34, ABCD1/ALDP, ABCD2/ALDRP, and ABCD3/PMP70. Also interacts with the tumor suppressor CDKN2A/p19ARF.

It is found in the cytoplasm. It localises to the peroxisome membrane. Its function is as follows. Necessary for early peroxisomal biogenesis. Acts both as a cytosolic chaperone and as an import receptor for peroxisomal membrane proteins (PMPs). Binds and stabilizes newly synthesized PMPs in the cytoplasm by interacting with their hydrophobic membrane-spanning domains, and targets them to the peroxisome membrane by binding to the integral membrane protein PEX3. Excludes CDKN2A from the nucleus and prevents its interaction with MDM2, which results in active degradation of TP53. The protein is Peroxisomal biogenesis factor 19 (PEX19) of Pongo abelii (Sumatran orangutan).